We begin with the raw amino-acid sequence, 1442 residues long: ABC transporter G family member 35 (1442 aa).

An ABC transporter 1 domain is found at 169–442 (LGMIGIRLAK…FESFGFKCPE (274 aa)). Residue 202–209 (GPPSSGKT) coordinates ATP. The 214-residue stretch at 520 to 733 (ELLKSCWDKE…AFNAITVNEL (214 aa)) folds into the ABC transmembrane type-2 1 domain. 7 helical membrane passes run 538-558 (FFYVFKTVQIIIIAAITSTLY), 573-593 (IYVGSLLFAMIVNMFNGLAEM), 619-639 (LPTFLLGIPISIFESTAWMVV), 657-677 (FLIIFLIQQMAAGIFRFIAST), 683-703 (IANTGGVLVLLVVFLTGGFLL), 714-734 (WAYWISPLSYAFNAITVNELF), and 769-789 (IGVGGLLGFTVIFNGFFTLAL). Positions 840 to 1092 (MSFDDVKYFV…KVVEYFESFP (253 aa)) constitute an ABC transporter 2 domain. 885 to 892 (GVSGAGKT) contributes to the ATP binding site. Residues 1165-1379 (GQFKSCLWKQ…TIYGLITSQY (215 aa)) enclose the ABC transmembrane type-2 2 domain. 7 helical membrane-spanning segments follow: residues 1186 to 1206 (LVRFIFTLATSLMIGSVFWQI), 1218 to 1238 (MVIGAIYAAVVFVGINNCSTV), 1272 to 1292 (LPYVLIQTTYYSLIIYSMVGF), 1299 to 1319 (FLWFIFINYFSFLYWTYYGMM), 1329 to 1349 (VASIFASAFYGIFNLFSGFFI), 1357 to 1377 (WWVWYYWICPVAWTIYGLITS), and 1414 to 1434 (PVAGVLVGFTVFFAFIFAFCI).

The protein belongs to the ABC transporter superfamily. ABCG family. PDR (TC 3.A.1.205) subfamily. In terms of tissue distribution, ubiquitous with higher levels in roots.

Its subcellular location is the membrane. Its function is as follows. May be a general defense protein. The protein is ABC transporter G family member 35 (ABCG35) of Arabidopsis thaliana (Mouse-ear cress).